The sequence spans 209 residues: Glutathione S-transferase 1, isoform C (209 aa).

The GST N-terminal domain occupies 1–80; the sequence is MDFYYLPGSA…YLAEKYGKDD (80 aa). Glutathione is bound by residues serine 9, 50–52, and 64–66; these read HCI and ESR. The region spanning 86–207 is the GST C-terminal domain; that stretch reads DPQKRAVVNQ…AGIEEFKKYF (122 aa).

Belongs to the GST superfamily. Theta family. In terms of assembly, homodimer.

The catalysed reaction is RX + glutathione = an S-substituted glutathione + a halide anion + H(+). It carries out the reaction 1,1,1-trichloro-2,2-bis(4-chlorophenyl)ethane = 1,1-dichloro-2,2-bis(4-chlorophenyl)ethylene + chloride + H(+). Conjugation of reduced glutathione to a wide number of exogenous and endogenous hydrophobic electrophiles. Has DDT dehydrochlorinase activity. The polypeptide is Glutathione S-transferase 1, isoform C (GstD1) (Anopheles gambiae (African malaria mosquito)).